The sequence spans 967 residues: RNA polymerase-associated protein RapA (967 aa).

Residues 163–333 form the Helicase ATP-binding domain; it reads EVGKRHNPRV…FARLRLLDPN (171 aa). 176-183 is a binding site for ATP; the sequence is DEVGLGKT. Residues 279–282 carry the DEAH box motif; that stretch reads DEAH. The 172-residue stretch at 489–660 folds into the Helicase C-terminal domain; that stretch reads RVEWLLGFLT…NYLAQPNELG (172 aa).

This sequence belongs to the SNF2/RAD54 helicase family. RapA subfamily. As to quaternary structure, interacts with the RNAP. Has a higher affinity for the core RNAP than for the holoenzyme. Its ATPase activity is stimulated by binding to RNAP.

Functionally, transcription regulator that activates transcription by stimulating RNA polymerase (RNAP) recycling in case of stress conditions such as supercoiled DNA or high salt concentrations. Probably acts by releasing the RNAP, when it is trapped or immobilized on tightly supercoiled DNA. Does not activate transcription on linear DNA. Probably not involved in DNA repair. The protein is RNA polymerase-associated protein RapA of Proteus mirabilis (strain HI4320).